The primary structure comprises 715 residues: Fatty acid oxidation complex subunit alpha (715 aa).

The segment at 1–190 (MIYEGKAITV…KVGAVDAVVA (190 aa)) is enoyl-CoA hydratase/isomerase. Asp297 serves as a coordination point for substrate. The tract at residues 312–715 (HDVKQAAVLG…MAKNGQRFFN (404 aa)) is 3-hydroxyacyl-CoA dehydrogenase. Residues Met325, Asp344, 401 to 403 (VVE), Lys408, and Ser430 contribute to the NAD(+) site. His451 functions as the For 3-hydroxyacyl-CoA dehydrogenase activity in the catalytic mechanism. Asn454 is an NAD(+) binding site. Substrate is bound by residues Asn501 and Tyr660.

It in the N-terminal section; belongs to the enoyl-CoA hydratase/isomerase family. The protein in the C-terminal section; belongs to the 3-hydroxyacyl-CoA dehydrogenase family. In terms of assembly, heterotetramer of two alpha chains (FadB) and two beta chains (FadA).

The enzyme catalyses a (3S)-3-hydroxyacyl-CoA + NAD(+) = a 3-oxoacyl-CoA + NADH + H(+). It carries out the reaction a (3S)-3-hydroxyacyl-CoA = a (2E)-enoyl-CoA + H2O. It catalyses the reaction a 4-saturated-(3S)-3-hydroxyacyl-CoA = a (3E)-enoyl-CoA + H2O. The catalysed reaction is (3S)-3-hydroxybutanoyl-CoA = (3R)-3-hydroxybutanoyl-CoA. The enzyme catalyses a (3Z)-enoyl-CoA = a 4-saturated (2E)-enoyl-CoA. It carries out the reaction a (3E)-enoyl-CoA = a 4-saturated (2E)-enoyl-CoA. Its pathway is lipid metabolism; fatty acid beta-oxidation. Functionally, involved in the aerobic and anaerobic degradation of long-chain fatty acids via beta-oxidation cycle. Catalyzes the formation of 3-oxoacyl-CoA from enoyl-CoA via L-3-hydroxyacyl-CoA. It can also use D-3-hydroxyacyl-CoA and cis-3-enoyl-CoA as substrate. In Pseudomonas entomophila (strain L48), this protein is Fatty acid oxidation complex subunit alpha.